A 125-amino-acid chain; its full sequence is Small ribosomal subunit protein uS13 (125 aa).

The disordered stretch occupies residues 91–125 (HRRGLPARGQRTRTNARTRKGKRKTVAGKKKAGKK).

Belongs to the universal ribosomal protein uS13 family. In terms of assembly, part of the 30S ribosomal subunit. Forms a loose heterodimer with protein S19. Forms two bridges to the 50S subunit in the 70S ribosome.

Located at the top of the head of the 30S subunit, it contacts several helices of the 16S rRNA. In the 70S ribosome it contacts the 23S rRNA (bridge B1a) and protein L5 of the 50S subunit (bridge B1b), connecting the 2 subunits; these bridges are implicated in subunit movement. Contacts the tRNAs in the A and P-sites. This is Small ribosomal subunit protein uS13 from Chloroherpeton thalassium (strain ATCC 35110 / GB-78).